We begin with the raw amino-acid sequence, 88 residues long: Small ribosomal subunit protein bS20 (88 aa).

Residues 1-20 (MANTKSARKSLIKSKQQRKC) are disordered.

The protein belongs to the bacterial ribosomal protein bS20 family.

Functionally, binds directly to 16S ribosomal RNA. This Blochmanniella pennsylvanica (strain BPEN) protein is Small ribosomal subunit protein bS20.